We begin with the raw amino-acid sequence, 673 residues long: Thimet-like oligopeptidase (673 aa).

His-465 is a binding site for Zn(2+). Glu-466 is an active-site residue. Zn(2+)-binding residues include His-469 and His-472.

This sequence belongs to the peptidase M3 family. It depends on Zn(2+) as a cofactor.

The sequence is that of Thimet-like oligopeptidase from Dictyostelium discoideum (Social amoeba).